The following is a 322-amino-acid chain: 4-hydroxy-3-methylbut-2-enyl diphosphate reductase (322 aa).

[4Fe-4S] cluster is bound at residue Cys-15. Positions 44 and 77 each coordinate (2E)-4-hydroxy-3-methylbut-2-enyl diphosphate. Dimethylallyl diphosphate-binding residues include His-44 and His-77. Isopentenyl diphosphate contacts are provided by His-44 and His-77. Cys-99 contacts [4Fe-4S] cluster. (2E)-4-hydroxy-3-methylbut-2-enyl diphosphate is bound at residue His-127. His-127 provides a ligand contact to dimethylallyl diphosphate. Isopentenyl diphosphate is bound at residue His-127. Glu-129 serves as the catalytic Proton donor. Thr-168 is a (2E)-4-hydroxy-3-methylbut-2-enyl diphosphate binding site. Position 198 (Cys-198) interacts with [4Fe-4S] cluster. Residues Ser-226, Ser-227, Asn-228, and Ser-270 each contribute to the (2E)-4-hydroxy-3-methylbut-2-enyl diphosphate site. Residues Ser-226, Ser-227, Asn-228, and Ser-270 each coordinate dimethylallyl diphosphate. Ser-226, Ser-227, Asn-228, and Ser-270 together coordinate isopentenyl diphosphate.

The protein belongs to the IspH family. [4Fe-4S] cluster serves as cofactor.

It catalyses the reaction isopentenyl diphosphate + 2 oxidized [2Fe-2S]-[ferredoxin] + H2O = (2E)-4-hydroxy-3-methylbut-2-enyl diphosphate + 2 reduced [2Fe-2S]-[ferredoxin] + 2 H(+). The enzyme catalyses dimethylallyl diphosphate + 2 oxidized [2Fe-2S]-[ferredoxin] + H2O = (2E)-4-hydroxy-3-methylbut-2-enyl diphosphate + 2 reduced [2Fe-2S]-[ferredoxin] + 2 H(+). It functions in the pathway isoprenoid biosynthesis; dimethylallyl diphosphate biosynthesis; dimethylallyl diphosphate from (2E)-4-hydroxy-3-methylbutenyl diphosphate: step 1/1. Its pathway is isoprenoid biosynthesis; isopentenyl diphosphate biosynthesis via DXP pathway; isopentenyl diphosphate from 1-deoxy-D-xylulose 5-phosphate: step 6/6. Catalyzes the conversion of 1-hydroxy-2-methyl-2-(E)-butenyl 4-diphosphate (HMBPP) into a mixture of isopentenyl diphosphate (IPP) and dimethylallyl diphosphate (DMAPP). Acts in the terminal step of the DOXP/MEP pathway for isoprenoid precursor biosynthesis. The chain is 4-hydroxy-3-methylbut-2-enyl diphosphate reductase from Neisseria meningitidis serogroup C (strain 053442).